A 157-amino-acid chain; its full sequence is 3-hydroxybutyryl-CoA dehydratase (157 aa).

Residues 22–120 (KKEISSSDVV…IPERRRARLA (99 aa)) form the MaoC-like domain.

The enzyme catalyses (3R)-3-hydroxybutanoyl-CoA = (2E)-butenoyl-CoA + H2O. Functionally, involved in the regeneration of glyoxylate from a molecule of acetyl-CoA. The polypeptide is 3-hydroxybutyryl-CoA dehydratase (Methylorubrum extorquens (strain ATCC 14718 / DSM 1338 / JCM 2805 / NCIMB 9133 / AM1) (Methylobacterium extorquens)).